The following is an 89-amino-acid chain: UPF0298 protein GK1096 (89 aa).

The protein belongs to the UPF0298 family.

Its subcellular location is the cytoplasm. This is UPF0298 protein GK1096 from Geobacillus kaustophilus (strain HTA426).